The sequence spans 481 residues: Glutamyl-tRNA(Gln) amidotransferase subunit A (481 aa).

Residues Lys-74 and Ser-149 each act as charge relay system in the active site. Ser-173 acts as the Acyl-ester intermediate in catalysis.

This sequence belongs to the amidase family. GatA subfamily. In terms of assembly, heterotrimer of A, B and C subunits.

It catalyses the reaction L-glutamyl-tRNA(Gln) + L-glutamine + ATP + H2O = L-glutaminyl-tRNA(Gln) + L-glutamate + ADP + phosphate + H(+). Allows the formation of correctly charged Gln-tRNA(Gln) through the transamidation of misacylated Glu-tRNA(Gln) in organisms which lack glutaminyl-tRNA synthetase. The reaction takes place in the presence of glutamine and ATP through an activated gamma-phospho-Glu-tRNA(Gln). The polypeptide is Glutamyl-tRNA(Gln) amidotransferase subunit A (Francisella tularensis subsp. holarctica (strain FTNF002-00 / FTA)).